Consider the following 593-residue polypeptide: NADH-quinone oxidoreductase subunit C/D (593 aa).

The NADH dehydrogenase I subunit C stretch occupies residues 1-184 (MTADNAIFIP…DPYSLTLAKQ (184 aa)). Positions 208 to 593 (DYMFLNLGPN…IDFVMADVDR (386 aa)) are NADH dehydrogenase I subunit D.

The protein in the N-terminal section; belongs to the complex I 30 kDa subunit family. In the C-terminal section; belongs to the complex I 49 kDa subunit family. NDH-1 is composed of 13 different subunits. Subunits NuoB, CD, E, F, and G constitute the peripheral sector of the complex.

It localises to the cell inner membrane. It catalyses the reaction a quinone + NADH + 5 H(+)(in) = a quinol + NAD(+) + 4 H(+)(out). In terms of biological role, NDH-1 shuttles electrons from NADH, via FMN and iron-sulfur (Fe-S) centers, to quinones in the respiratory chain. The immediate electron acceptor for the enzyme in this species is believed to be ubiquinone. Couples the redox reaction to proton translocation (for every two electrons transferred, four hydrogen ions are translocated across the cytoplasmic membrane), and thus conserves the redox energy in a proton gradient. This chain is NADH-quinone oxidoreductase subunit C/D, found in Pseudomonas putida (strain W619).